The primary structure comprises 546 residues: Chaperonin GroEL (546 aa).

Residues 30–33 (TLGP), Lys51, 87–91 (DGTTT), Gly415, 479–481 (NAA), and Asp495 contribute to the ATP site.

The protein belongs to the chaperonin (HSP60) family. In terms of assembly, forms a cylinder of 14 subunits composed of two heptameric rings stacked back-to-back. Interacts with the co-chaperonin GroES.

It localises to the cytoplasm. It catalyses the reaction ATP + H2O + a folded polypeptide = ADP + phosphate + an unfolded polypeptide.. Functionally, together with its co-chaperonin GroES, plays an essential role in assisting protein folding. The GroEL-GroES system forms a nano-cage that allows encapsulation of the non-native substrate proteins and provides a physical environment optimized to promote and accelerate protein folding. This chain is Chaperonin GroEL, found in Pseudomonas putida (strain W619).